Here is a 531-residue protein sequence, read N- to C-terminus: Acyl-CoA ligase azaF (531 aa).

Position 188 to 199 (188 to 199) interacts with AMP; sequence RLFSSGTTGLPK. The AMP-binding stretch occupies residues 449–525; the sequence is EVEGVLRNHP…DAIPRNASGK (77 aa).

It belongs to the ATP-dependent AMP-binding enzyme family.

The protein operates within secondary metabolite biosynthesis. Functionally, acyl-CoA ligase; part of the gene cluster that mediates the biosynthesis of azaphilones, a class of fungal metabolites characterized by a highly oxygenated pyrano-quinone bicyclic core and exhibiting a broad range of bioactivities. In the first step, the non-reducing polyketide synthase azaA forms the hexaketide precursor from successive condensations of five malonyl-CoA units, presumably with a simple acetyl-CoA starter unit. The reactive polyketide chain then undergoes a PT-mediated C2-C7 cyclization to afford the aromatic ring and is eventually released as an aldehyde through the R-domain. The putative ketoreductase azaE is proposed to catalyze the reduction of the terminal ketone resulting in the early culture product FK17-P2a. The monooxygenase azaH was demonstrated to be the only enzyme required to convert FK17-P2a to azanigerone E. AzaH first hydroxylates the benzaldehyde intermediate FK17-P2a at C4, which triggers the formation of the pyran-ring to afford azanigerone E. In parallel, the 2,4-dimethylhexanoyl chain is synthesized by the HR-PKS azaB and is proposed to be transferred to the C4-hydroxyl of azanigerone E by the acyltransferase azaD directly from the ACP domain of azaB. Alternatively, the 2,4-dimethyl-hexanoyl chain may be offloaded from the HR-PKS as a carboxylic acid and converted to an acyl-CoA by azaF. The resulting acyl-CoA molecule could then be taken up as a substrate by AzaD to form azanigerone B. To yield the carboxylic acid substituent in azanigerone A, the hydroxypropyl side chain of azanigerone B would need to undergo a C-C oxidative cleavage catalyzed by cytochrome P450 AzaI. AzaI is proposed to act on a vicinal diol that leads to a C-C bond scission either through an alkoxyradical intermediate or a peroxy complex. In the biosynthesis of azanigerone A, azanigerone B first undergoes hydroxylation at C10, possibly catalyzed by one of the two FAD-dependent monooxygenases encoded in the cluster, azaG or azaL, resulting in the vicinal diol azanigerone C. Oxidative cleavage of azanigerone C by azaI would yield the corresponding aldehyde derivative of azanigerone A. Finally, the dehydrogenase azaJ is proposed to convert the aldehyde functional group into the carboxylic acid, completing the conversion from azanigerone B to azanigerone A. Alternatively, the oxidation of aldehyde to carboxylic acid may be catalyzed by the same P450 enzyme azaI via consecutive oxidation or by endogenous alcohol dehydrogenase. The protein is Acyl-CoA ligase azaF of Aspergillus niger (strain ATCC 1015 / CBS 113.46 / FGSC A1144 / LSHB Ac4 / NCTC 3858a / NRRL 328 / USDA 3528.7).